The following is a 424-amino-acid chain: Cyclin-dependent kinase D-1 (424 aa).

The 281-residue stretch at 19-299 (YLKREVLGEG…AQQALEHRYF (281 aa)) folds into the Protein kinase domain. Residues 25-33 (LGEGTYGVV) and Lys48 each bind ATP. Position 29 is a phosphothreonine (Thr29). Tyr30 bears the Phosphotyrosine mark. Asp141 (proton acceptor) is an active-site residue. Ser168 bears the Phosphoserine mark. Thr174 carries the post-translational modification Phosphothreonine. Disordered stretches follow at residues 303–337 (PAPT…PVVL) and 359–424 (ADRT…GYTE). A compositionally biased stretch (basic and acidic residues) spans 359–374 (ADRTEEHPSGARHMDD).

This sequence belongs to the protein kinase superfamily. CMGC Ser/Thr protein kinase family. CDC2/CDKX subfamily. In terms of assembly, interacts with CYCH1-1. As to expression, expressed in actively dividing cells of roots, leaves and shoots. Expressed in the intercalary meristem and the elongation zone of internodes.

The protein localises to the nucleus. It carries out the reaction L-seryl-[protein] + ATP = O-phospho-L-seryl-[protein] + ADP + H(+). It catalyses the reaction L-threonyl-[protein] + ATP = O-phospho-L-threonyl-[protein] + ADP + H(+). The enzyme catalyses [DNA-directed RNA polymerase] + ATP = phospho-[DNA-directed RNA polymerase] + ADP + H(+). In terms of biological role, CDK-activating kinase that may control G1/S phase progression. May control the rate of cell differentiation to accomplish proper development of organs, or in response to a changing environment. Forms a complex with cyclin CYCH1-1 that phosphorylates CDKA-1 and the C-terminal domain (CTD) of the large subunit of RNA polymerase II. This chain is Cyclin-dependent kinase D-1 (CDKD-1), found in Oryza sativa subsp. japonica (Rice).